Consider the following 2234-residue polypeptide: Bridge-like lipid transfer protein family member 2 (2234 aa).

The first 31 residues, M1–T31, serve as a signal peptide directing secretion. The segment at L29–P108 is transmembrane domain. Phosphoserine is present on S563. A disordered region spans residues Q1496–S1529. Residues I1814 to D1885 are a coiled coil. Phosphoserine occurs at positions 1846 and 2090.

It belongs to the SABRE family.

The protein resides in the cell membrane. The protein localises to the endoplasmic reticulum membrane. It is found in the mitochondrion membrane. In terms of biological role, tube-forming lipid transport protein which binds to phosphatidylinositols and affects phosphatidylinositol-4,5-bisphosphate (PtdIns-4,5-P2) distribution. In Mus musculus (Mouse), this protein is Bridge-like lipid transfer protein family member 2 (Bltp2).